The primary structure comprises 194 residues: Imidazoleglycerol-phosphate dehydratase (194 aa).

Belongs to the imidazoleglycerol-phosphate dehydratase family.

Its subcellular location is the cytoplasm. It catalyses the reaction D-erythro-1-(imidazol-4-yl)glycerol 3-phosphate = 3-(imidazol-4-yl)-2-oxopropyl phosphate + H2O. It functions in the pathway amino-acid biosynthesis; L-histidine biosynthesis; L-histidine from 5-phospho-alpha-D-ribose 1-diphosphate: step 6/9. In Caldanaerobacter subterraneus subsp. tengcongensis (strain DSM 15242 / JCM 11007 / NBRC 100824 / MB4) (Thermoanaerobacter tengcongensis), this protein is Imidazoleglycerol-phosphate dehydratase.